Here is a 201-residue protein sequence, read N- to C-terminus: 2-phospho-L-lactate guanylyltransferase (201 aa).

Belongs to the CofC family. In terms of assembly, homodimer.

It catalyses the reaction (2S)-2-phospholactate + GTP + H(+) = (2S)-lactyl-2-diphospho-5'-guanosine + diphosphate. It functions in the pathway cofactor biosynthesis; coenzyme F420 biosynthesis. Functionally, guanylyltransferase that catalyzes the activation of (2S)-2-phospholactate (2-PL) as (2S)-lactyl-2-diphospho-5'-guanosine, via the condensation of 2-PL with GTP. It is involved in the biosynthesis of coenzyme F420, a hydride carrier cofactor. The sequence is that of 2-phospho-L-lactate guanylyltransferase from Natronomonas pharaonis (strain ATCC 35678 / DSM 2160 / CIP 103997 / JCM 8858 / NBRC 14720 / NCIMB 2260 / Gabara) (Halobacterium pharaonis).